Reading from the N-terminus, the 2171-residue chain is Mediator of DNA damage checkpoint protein 1 (2171 aa).

Residues 1 to 19 (MEDTQAIDWDVEEEEETEQ) are compositionally biased toward acidic residues. Positions 1 to 22 (MEDTQAIDWDVEEEEETEQSSE) are disordered. The interaction with CHEK2 stretch occupies residues 1–150 (MEDTQAIDWD…SRGPLTVEET (150 aa)). Residues 2–220 (EDTQAIDWDV…PFAFNLNSDT (219 aa)) are interaction with the MRN complex. T4 carries the post-translational modification Phosphothreonine. One can recognise an FHA domain in the interval 54–105 (NVVGRMPDCSVALPFPSISKQHAEIEILAWDKAPILRDCGSLNGTQILRPPK). S108 is subject to Phosphoserine. The tract at residues 145–568 (LTVEETPRVQ…PAKLLVVSLE (424 aa)) is required for nuclear localization (NLS1). T146 is subject to Phosphothreonine. Residues S168, S176, S196, and S218 each carry the phosphoserine modification. Disordered regions lie at residues 185–248 (RTTS…AKQS) and 261–317 (DQPL…AEVH). T220 bears the Phosphothreonine mark. A compositionally biased stretch (basic and acidic residues) spans 261 to 278 (DQPLVKERDDDTKVKRGA). S299 bears the Phosphoserine mark. T301 is modified (phosphothreonine). The span at 306 to 317 (DSRPPGRPAEVH) shows a compositional bias: basic and acidic residues. Position 329 is a phosphoserine (S329). T331 carries the phosphothreonine modification. Residues 355–387 (GVGTRGPGAPGLAHLQESQAGSDTDVEEGKAPQ) are disordered. Phosphoserine occurs at positions 372 and 376. Position 378 is a phosphothreonine (T378). A phosphoserine mark is found at S394, S397, and S402. Residue T404 is modified to Phosphothreonine. S411 carries the phosphoserine modification. Disordered regions lie at residues 443 to 469 (QRSQ…NREA) and 481 to 522 (VRAH…VDIN). T449 is subject to Phosphothreonine. Phosphoserine is present on S453. A Phosphothreonine modification is found at T455. S485, S495, S498, S504, S505, and S513 each carry phosphoserine. Positions 513–522 (SQASTTVDIN) are enriched in polar residues. T523 carries the post-translational modification Phosphothreonine. S590 is modified (phosphoserine). Residue K616 forms a Glycyl lysine isopeptide (Lys-Gly) (interchain with G-Cter in SUMO1); alternate linkage. A Glycyl lysine isopeptide (Lys-Gly) (interchain with G-Cter in SUMO2); alternate cross-link involves residue K616. 2 disordered regions span residues 653–689 (DTLG…DNYG) and 780–1969 (SPPR…TKLN). Residues 671 to 685 (GREREQHVGGTKDSE) are compositionally biased toward basic and acidic residues. 2 positions are modified to phosphoserine: S780 and S793. K812 carries the post-translational modification N6-acetyllysine. Composition is skewed to basic and acidic residues over residues 819–844 (ETAE…ERQT), 851–862 (ELTKGKQDREQK), 868–905 (DTQR…EKQV), and 914–951 (AFER…RGEP). Phosphoserine occurs at positions 955 and 998. A compositionally biased stretch (polar residues) spans 955–964 (SQDQKGQASS). Over residues 1016–1031 (KASRIRAAEKVSRGDQ) the composition is skewed to basic and acidic residues. The residue at position 1033 (S1033) is a Phosphoserine. Residues 1040 to 1051 (PTVPEAPAPPQK) are compositionally biased toward pro residues. Phosphoserine is present on residues S1068 and S1086. Basic residues predominate over residues 1103 to 1113 (PKPKIRTRKSS). Polar residues-rich tracts occupy residues 1129 to 1157 (PSTS…SVKT) and 1170 to 1187 (PCTS…SQVT). Positions 1148–1692 (SRTNRSSVKT…TNRSSVKTPE (545 aa)) are interaction with the PRKDC complex. Position 1157 is a phosphothreonine (T1157). T1198 carries the post-translational modification Phosphothreonine. Residues 1210 to 1227 (QPSTSTDRPVTSEPTSHA) show a composition bias toward polar residues. S1235 carries the phosphoserine modification. T1239 is modified (phosphothreonine). The segment covering 1251–1268 (QPSTSTDQPVTSEPTYQA) has biased composition (polar residues). Phosphothreonine is present on residues T1280 and T1302. Over residues 1306 to 1318 (TSRTTRSRTNMSS) the composition is skewed to low complexity. Polar residues-rich tracts occupy residues 1334–1350 (PSTS…TSRA) and 1375–1403 (PSTS…SVKT). Residues 1429–1441 (TSRTTRSRTNMSS) show a composition bias toward low complexity. Positions 1457–1473 (PSTSTEQPVTPEPTSRA) are enriched in polar residues. 2 positions are modified to phosphoserine: S1481 and S1482. K1484 carries the N6-acetyllysine modification. T1485 bears the Phosphothreonine mark. Residue K1495 forms a Glycyl lysine isopeptide (Lys-Gly) (interchain with G-Cter in SUMO1); alternate linkage. A Glycyl lysine isopeptide (Lys-Gly) (interchain with G-Cter in SUMO2); alternate cross-link involves residue K1495. Composition is skewed to polar residues over residues 1498–1526 (PSTS…SVKT), 1538–1557 (QPST…QVTR), and 1580–1596 (ASAS…TSRT). Phosphothreonine is present on residues T1507 and T1548. 2 positions are modified to phosphothreonine: T1615 and T1630. Polar residues-rich tracts occupy residues 1620-1649 (QPST…SVKT) and 1661-1678 (QPST…TSRA). S1646 is modified (phosphoserine). 2 positions are modified to phosphothreonine: T1649 and T1671. At S1686 the chain carries Phosphoserine. T1690 is subject to Phosphothreonine. The segment covering 1693–1702 (PVVPTAPEPH) has biased composition (pro residues). The segment covering 1706 to 1718 (STDQPVTPKLTSR) has biased composition (polar residues). 3 positions are modified to phosphothreonine: T1712, T1746, and T1753. The span at 1760–1771 (GGQSKTLRSSTV) shows a compositional bias: polar residues. Phosphoserine is present on S1763. T1779 bears the Phosphothreonine mark. The segment covering 1780-1801 (PEFQSPVTTDQPISPEPITQPS) has biased composition (polar residues). The segment at 1780 to 2171 (PEFQSPVTTD…VLSPLEMSST (392 aa)) is required for nuclear localization (NLS2). A phosphoserine mark is found at S1784 and S1793. A Glycyl lysine isopeptide (Lys-Gly) (interchain with G-Cter in SUMO2) cross-link involves residue K1822. Phosphoserine is present on S1857. K1872 participates in a covalent cross-link: Glycyl lysine isopeptide (Lys-Gly) (interchain with G-Cter in SUMO2). The residue at position 1882 (T1882) is a Phosphothreonine. S1902 carries the post-translational modification Phosphoserine. Polar residues predominate over residues 1905-1918 (HQKQPQRGEVSQKT). Residue K1922 forms a Glycyl lysine isopeptide (Lys-Gly) (interchain with G-Cter in SUMO1); alternate linkage. K1922 participates in a covalent cross-link: Glycyl lysine isopeptide (Lys-Gly) (interchain with G-Cter in SUMO2); alternate. Residues 1929 to 1939 (AEKPGKEEDVV) show a composition bias toward basic and acidic residues. T1940 carries the phosphothreonine modification. 2 consecutive BRCT domains span residues 1974-2052 (APKV…EYVV) and 2073-2164 (RERR…FVLS). R2025 is modified (omega-N-methylarginine).

As to quaternary structure, homodimer. Interacts with H2AX, which requires phosphorylation of H2AX on 'Ser-139'. Interacts with the MRN complex, composed of MRE11, RAD50, and NBN. Interacts with CHEK2, which requires ATM-mediated phosphorylation of 'Thr-68' within the FHA domain of CHEK2. Interacts constitutively with the BRCA1-BARD1 complex, SMC1A and TP53BP1. Interacts with ATM and FANCD2, and these interactions are reduced upon DNA damage. Also interacts with the PRKDC complex, composed of XRCC6/KU70, XRCC5/KU80 and PRKDC/XRCC7. This interaction may be required for PRKDC autophosphorylation, which is essential for DNA double strand break (DSB) repair. When phosphorylated by ATM, interacts with RNF8 (via FHA domain). Interacts with CEP164. When phosphorylated, interacts with APTX (via FHA-like domain). Interacts (when phosphorylated) with TOPBP1; promoting TOPBP1 localization to DNA damage sites during mitosis. Interacts (when phosphorylated) with NBN; promoting NBN and MRN complex localization to DNA damage sites. Post-translationally, phosphorylated upon exposure to ionizing radiation (IR), ultraviolet radiation (UV), and hydroxyurea (HU). Phosphorylation in response to IR requires ATM, NBN, and possibly CHEK2. Also phosphorylated during the G2/M phase of the cell cycle and during activation of the mitotic spindle checkpoint. Phosphorylation at Thr-4 by ATM stabilizes and enhances homodimerization via the FHA domain. Phosphorylated at Ser-168 and Ser-196 by CK2 in response to DNA damage during mitosis, promoting interaction with TOPBP1. Phosphorylated by CK2 in response to DNA damage, promoting interaction with NBN and recruitment of the MRN complex to DNA damage sites. Sumoylation at Lys-1922 by PIAS4 following DNA damage promotes ubiquitin-mediated degradation. In terms of processing, ubiquitinated by RNF4, leading to proteasomal degradation; undergoes 'Lys-48'-linked polyubiquitination.

It is found in the nucleus. The protein localises to the chromosome. In terms of biological role, histone reader protein required for checkpoint-mediated cell cycle arrest in response to DNA damage within both the S phase and G2/M phases of the cell cycle. Specifically recognizes and binds histone H2AX phosphorylated at 'Ser-139', a marker of DNA damage, serving as a scaffold for the recruitment of DNA repair and signal transduction proteins to discrete foci of DNA damage sites. Also required for downstream events subsequent to the recruitment of these proteins. These include phosphorylation and activation of the ATM, CHEK1 and CHEK2 kinases, and stabilization of TP53/p53 and apoptosis. ATM and CHEK2 may also be activated independently by a parallel pathway mediated by TP53BP1. Required for chromosomal stability during mitosis by promoting recruitment of TOPBP1 to DNA double strand breaks (DSBs): TOPBP1 forms filamentous assemblies that bridge MDC1 and tether broken chromosomes during mitosis. Required for the repair of DSBs via homologous recombination by promoting recruitment of NBN component of the MRN complex to DSBs. This is Mediator of DNA damage checkpoint protein 1 (MDC1) from Pan troglodytes (Chimpanzee).